The sequence spans 365 residues: tRNA-specific 2-thiouridylase MnmA (365 aa).

ATP is bound by residues 14-21 (AMSGGVDS) and Leu40. Cys108 functions as the Nucleophile in the catalytic mechanism. Cys108 and Cys204 form a disulfide bridge. Residue Gly132 participates in ATP binding. The segment at 154-156 (KDQ) is interaction with tRNA. Catalysis depends on Cys204, which acts as the Cysteine persulfide intermediate.

This sequence belongs to the MnmA/TRMU family.

The protein localises to the cytoplasm. It carries out the reaction S-sulfanyl-L-cysteinyl-[protein] + uridine(34) in tRNA + AH2 + ATP = 2-thiouridine(34) in tRNA + L-cysteinyl-[protein] + A + AMP + diphosphate + H(+). Its function is as follows. Catalyzes the 2-thiolation of uridine at the wobble position (U34) of tRNA, leading to the formation of s(2)U34. The chain is tRNA-specific 2-thiouridylase MnmA from Rickettsia africae (strain ESF-5).